Reading from the N-terminus, the 355-residue chain is UDP-N-acetylglucosamine--N-acetylmuramyl-(pentapeptide) pyrophosphoryl-undecaprenol N-acetylglucosamine transferase (355 aa).

Residues 14 to 16, Asn-123, Arg-164, Ser-190, and Gln-284 contribute to the UDP-N-acetyl-alpha-D-glucosamine site; that span reads TGG.

Belongs to the glycosyltransferase 28 family. MurG subfamily.

It is found in the cell inner membrane. It carries out the reaction di-trans,octa-cis-undecaprenyl diphospho-N-acetyl-alpha-D-muramoyl-L-alanyl-D-glutamyl-meso-2,6-diaminopimeloyl-D-alanyl-D-alanine + UDP-N-acetyl-alpha-D-glucosamine = di-trans,octa-cis-undecaprenyl diphospho-[N-acetyl-alpha-D-glucosaminyl-(1-&gt;4)]-N-acetyl-alpha-D-muramoyl-L-alanyl-D-glutamyl-meso-2,6-diaminopimeloyl-D-alanyl-D-alanine + UDP + H(+). It functions in the pathway cell wall biogenesis; peptidoglycan biosynthesis. Functionally, cell wall formation. Catalyzes the transfer of a GlcNAc subunit on undecaprenyl-pyrophosphoryl-MurNAc-pentapeptide (lipid intermediate I) to form undecaprenyl-pyrophosphoryl-MurNAc-(pentapeptide)GlcNAc (lipid intermediate II). The sequence is that of UDP-N-acetylglucosamine--N-acetylmuramyl-(pentapeptide) pyrophosphoryl-undecaprenol N-acetylglucosamine transferase from Synechocystis sp. (strain ATCC 27184 / PCC 6803 / Kazusa).